Consider the following 208-residue polypeptide: Small ribosomal subunit protein uS4 (208 aa).

The region spanning 95-157 (RRIDNVVYRA…DSLKKLVRSN (63 aa)) is the S4 RNA-binding domain.

The protein belongs to the universal ribosomal protein uS4 family. As to quaternary structure, part of the 30S ribosomal subunit. Contacts protein S5. The interaction surface between S4 and S5 is involved in control of translational fidelity.

Its function is as follows. One of the primary rRNA binding proteins, it binds directly to 16S rRNA where it nucleates assembly of the body of the 30S subunit. Functionally, with S5 and S12 plays an important role in translational accuracy. This Borrelia hermsii (strain HS1 / DAH) protein is Small ribosomal subunit protein uS4.